Consider the following 223-residue polypeptide: Protein UGX2 (223 aa).

Positions 78–95 are enriched in basic residues; sequence SNKRAKMKSKTKLTRTAK. The segment at 78 to 117 is disordered; the sequence is SNKRAKMKSKTKLTRTAKQRRESPVCERDESDEDNDSDHY. Over residues 96 to 105 the composition is skewed to basic and acidic residues; it reads QRRESPVCER.

This Saccharomyces cerevisiae (strain ATCC 204508 / S288c) (Baker's yeast) protein is Protein UGX2 (UGX2).